We begin with the raw amino-acid sequence, 102 residues long: Mini zinc finger protein 1 (102 aa).

Positions 1 to 13 (MMKKRQMVIKQRS) are enriched in basic residues. A disordered region spans residues 1–34 (MMKKRQMVIKQRSRNSNTSSSWTTTSSSSSSSEI). Over residues 14 to 32 (RNSNTSSSWTTTSSSSSSS) the composition is skewed to low complexity. The ZF-HD dimerization-type; degenerate zinc finger occupies 39–88 (YVECQKNHAANIGGYAVDGCREFMAAGVEGTVDALRCAACGCHRNFHRKE).

As to quaternary structure, homo- and heterodimers. Interacts with ZHD1, ZHD5, ZHD6, ZHD7, ZHD8, ZHD10 and ZHD13. As to expression, mostly expressed in roots and stems, present in siliques and seedlings, and weakly observed in petioles, leaves and flowers.

It localises to the cytoplasm. Inhibits zinc finger homeodomain (ZHD) transcription factors, such as ZHD5, by interacting with them to prevent both their nuclear localization and their DNA-binding properties. Involved in integrating signals from multiple hormones by preventing the expression of genes involved in gibberellic acid (GA), auxin and brassinosteroid signaling and by promoting the expression of abscisic acid (ABA)-responsive genes. Regulates several development aspects, including photomorphogenesis, apical dominance, longevity, flower morphology and fertility, as well as root and stem elongation. Promotes the formation of ectopic shoot meristems on leaf margins. This is Mini zinc finger protein 1 (MIF1) from Arabidopsis thaliana (Mouse-ear cress).